The sequence spans 271 residues: 3-methyl-2-oxobutanoate hydroxymethyltransferase (271 aa).

Mg(2+) is bound by residues aspartate 53 and aspartate 92. 3-methyl-2-oxobutanoate-binding positions include 53 to 54, aspartate 92, and lysine 120; that span reads DS. Glutamate 122 serves as a coordination point for Mg(2+). The Proton acceptor role is filled by glutamate 189.

This sequence belongs to the PanB family. Homodecamer; pentamer of dimers. Mg(2+) serves as cofactor.

It is found in the cytoplasm. It catalyses the reaction 3-methyl-2-oxobutanoate + (6R)-5,10-methylene-5,6,7,8-tetrahydrofolate + H2O = 2-dehydropantoate + (6S)-5,6,7,8-tetrahydrofolate. It functions in the pathway cofactor biosynthesis; (R)-pantothenate biosynthesis; (R)-pantoate from 3-methyl-2-oxobutanoate: step 1/2. Catalyzes the reversible reaction in which hydroxymethyl group from 5,10-methylenetetrahydrofolate is transferred onto alpha-ketoisovalerate to form ketopantoate. The polypeptide is 3-methyl-2-oxobutanoate hydroxymethyltransferase (Burkholderia multivorans (strain ATCC 17616 / 249)).